Reading from the N-terminus, the 174-residue chain is Chorion class CB protein M5H4 (174 aa).

Positions 1-20 (MTTIVVLICASALFVQLAFS) are cleaved as a signal peptide. Positions 21-71 (QCLGRDPVIGFGGAYGSGWGGYDAISPYDGLGYGVPYSAGFIGLSPSNLAA) are left arm. Residues 72-142 (SCGGALAVNS…GDGAIGIVSE (71 aa)) form a central domain region. The right arm stretch occupies residues 143–174 (APIVAPASIGYGQWPVNAGYKGIGPCGCGGLY).

It belongs to the chorion protein family.

This protein is one of many from the eggshell of the silk moth. This is Chorion class CB protein M5H4 from Bombyx mori (Silk moth).